The sequence spans 696 residues: HIPL2 protein (696 aa).

Positions 1–24 (MAKTNQAITICSLLLLLLLSETTS) are cleaved as a signal peptide. N-linked (GlcNAc...) asparagine glycosylation is found at N38, N69, N74, N108, N124, N148, N175, N339, N431, N513, N519, N528, N581, and N651. S672 carries the GPI-anchor amidated serine lipid modification. Residues 673 to 696 (SARKLCFSVFLLLSLLMMFLTLLD) constitute a propeptide, removed in mature form.

This sequence belongs to the PQQ oxidoreductase GdhB family. It depends on pyrroloquinoline quinone as a cofactor.

It localises to the cell membrane. This Arabidopsis thaliana (Mouse-ear cress) protein is HIPL2 protein (HIPL2).